The primary structure comprises 67 residues: Large ribosomal subunit protein bL32 (67 aa).

Basic residues predominate over residues M1 to Q19. The interval M1–A22 is disordered.

The protein belongs to the bacterial ribosomal protein bL32 family.

The chain is Large ribosomal subunit protein bL32 from Kineococcus radiotolerans (strain ATCC BAA-149 / DSM 14245 / SRS30216).